The chain runs to 359 residues: Probable dual-specificity RNA methyltransferase RlmN (359 aa).

Glu100 acts as the Proton acceptor in catalysis. Positions 106-340 (TDKRLTVCVS…VSVRASRGRD (235 aa)) constitute a Radical SAM core domain. Cys113 and Cys345 are oxidised to a cystine. [4Fe-4S] cluster contacts are provided by Cys120, Cys124, and Cys127. Residues 167 to 168 (GE), Ser197, 226 to 228 (SLH), and Asn302 contribute to the S-adenosyl-L-methionine site. Cys345 (S-methylcysteine intermediate) is an active-site residue.

Belongs to the radical SAM superfamily. RlmN family. The cofactor is [4Fe-4S] cluster.

Its subcellular location is the cytoplasm. It catalyses the reaction adenosine(2503) in 23S rRNA + 2 reduced [2Fe-2S]-[ferredoxin] + 2 S-adenosyl-L-methionine = 2-methyladenosine(2503) in 23S rRNA + 5'-deoxyadenosine + L-methionine + 2 oxidized [2Fe-2S]-[ferredoxin] + S-adenosyl-L-homocysteine. The catalysed reaction is adenosine(37) in tRNA + 2 reduced [2Fe-2S]-[ferredoxin] + 2 S-adenosyl-L-methionine = 2-methyladenosine(37) in tRNA + 5'-deoxyadenosine + L-methionine + 2 oxidized [2Fe-2S]-[ferredoxin] + S-adenosyl-L-homocysteine. Specifically methylates position 2 of adenine 2503 in 23S rRNA and position 2 of adenine 37 in tRNAs. This chain is Probable dual-specificity RNA methyltransferase RlmN, found in Prochlorococcus marinus (strain NATL2A).